The primary structure comprises 542 residues: NXPE family member 4 (542 aa).

Residues 1–26 (MKMMASRKSLWVLLFIVIFWISFTVF) form the signal peptide. Asn-91, Asn-92, Asn-159, and Asn-223 each carry an N-linked (GlcNAc...) asparagine glycan.

It belongs to the NXPE family.

The protein localises to the secreted. This chain is NXPE family member 4 (Nxpe4), found in Rattus norvegicus (Rat).